A 390-amino-acid polypeptide reads, in one-letter code: MKEGRGSFSVERGPRKERETAQSGMWKGNSPAGSQGAAMEGTGGELGGQGNWGPEDAPGLLARASLIMLPWPLPLASSALTLLFGALTSLFLWYCYRLGSQDMQALGAGSRAGGVRGGPVGCSEAGGPSPGGPGDPGEGPRTEGLVSRRLRAYARRYSWAGMGRVRRAAQGGPGPGRGPGVLGIQRPGLLFLPDLPSAPFVPRDAQRHDVELLESSFPAILRDFGAVSWDFSGTTPPPRGWSPPLAPGCYQLLLYQAGRCQPSNCRRCPGAYRALRGLRSFMSANTFGNAGFSVLLPGARLEGRCGPTNARVRCHLGLKIPPGCELVVGGEPQCWAEGHCLLVDDSFLHTVAHNGSPEDGPRVVFIVDLWHPNVAGAERQALDFVFAPDP.

The tract at residues 1–54 (MKEGRGSFSVERGPRKERETAQSGMWKGNSPAGSQGAAMEGTGGELGGQGNWGP) is disordered. The Cytoplasmic portion of the chain corresponds to 1–72 (MKEGRGSFSV…RASLIMLPWP (72 aa)). The segment covering 41–51 (GTGGELGGQGN) has biased composition (gly residues). The helical transmembrane segment at 73-95 (LPLASSALTLLFGALTSLFLWYC) threads the bilayer. The Lumenal segment spans residues 96 to 390 (YRLGSQDMQA…ALDFVFAPDP (295 aa)). The segment at 116–143 (RGGPVGCSEAGGPSPGGPGDPGEGPRTE) is disordered. Residues 128–137 (PSPGGPGDPG) are compositionally biased toward gly residues. S129 is subject to Phosphoserine.

This sequence belongs to the aspartyl/asparaginyl beta-hydroxylase family.

The protein localises to the membrane. The chain is Aspartate beta-hydroxylase domain-containing protein 1 (ASPHD1) from Homo sapiens (Human).